The following is a 282-amino-acid chain: uncharacterized protein (282 aa).

Residues 22 to 42 form a helical membrane-spanning segment; that stretch reads YLFTLGSFVTMFFVLCISPVF.

The protein resides in the cell membrane. This is an uncharacterized protein from Bacillus anthracis.